An 851-amino-acid polypeptide reads, in one-letter code: Protein translocase subunit SecA (851 aa).

ATP is bound by residues Gln-88, 106 to 110, and Asp-496; that span reads GEGKT. Cys-828, Cys-830, Cys-839, and His-840 together coordinate Zn(2+).

The protein belongs to the SecA family. Monomer and homodimer. Part of the essential Sec protein translocation apparatus which comprises SecA, SecYEG and auxiliary proteins SecDF-YajC and YidC. It depends on Zn(2+) as a cofactor.

It localises to the cell inner membrane. Its subcellular location is the cytoplasm. It carries out the reaction ATP + H2O + cellular proteinSide 1 = ADP + phosphate + cellular proteinSide 2.. Part of the Sec protein translocase complex. Interacts with the SecYEG preprotein conducting channel. Has a central role in coupling the hydrolysis of ATP to the transfer of proteins into and across the cell membrane, serving as an ATP-driven molecular motor driving the stepwise translocation of polypeptide chains across the membrane. This is Protein translocase subunit SecA from Helicobacter hepaticus (strain ATCC 51449 / 3B1).